A 64-amino-acid chain; its full sequence is Large ribosomal subunit protein uL30 (64 aa).

This sequence belongs to the universal ribosomal protein uL30 family. In terms of assembly, part of the 50S ribosomal subunit.

This is Large ribosomal subunit protein uL30 from Methylorubrum extorquens (strain CM4 / NCIMB 13688) (Methylobacterium extorquens).